The chain runs to 254 residues: Nickel import ATP-binding protein NikD (254 aa).

The region spanning 2–241 (PQQIELRNIA…PKHTVTRSLV (240 aa)) is the ABC transporter domain. An ATP-binding site is contributed by 36 to 43 (GGSGSGKS).

Belongs to the ABC transporter superfamily. Nickel importer (TC 3.A.1.5.3) family. In terms of assembly, the complex is composed of two ATP-binding proteins (NikD and NikE), two transmembrane proteins (NikB and NikC) and a solute-binding protein (NikA).

The protein resides in the cell inner membrane. The enzyme catalyses Ni(2+)(out) + ATP + H2O = Ni(2+)(in) + ADP + phosphate + H(+). Part of the ABC transporter complex NikABCDE involved in nickel import. Responsible for energy coupling to the transport system. The protein is Nickel import ATP-binding protein NikD of Shigella flexneri serotype 5b (strain 8401).